Reading from the N-terminus, the 1244-residue chain is Mitotic chromosome and X-chromosome-associated protein mix-1 (1244 aa).

Residue 32–39 participates in ATP binding; sequence GYNGSGKS. Residues 247 to 355 adopt a coiled-coil conformation; it reads VKKSAKEIED…AKRKEHEDSK (109 aa). Residues 337 to 355 show a composition bias toward basic and acidic residues; it reads LSKDREVLDAKRKEHEDSK. The interval 337-369 is disordered; it reads LSKDREVLDAKRKEHEDSKAANSKDIQSQSDDE. Polar residues predominate over residues 356-365; the sequence is AANSKDIQSQ. A coiled-coil region spans residues 415-472; sequence ITAAKKRGERLHNQIKHLEGEKATLSARSKSDIGSADNYQKEVDEINKQLQLLGFNID. The 129-residue stretch at 526–654 folds into the SMC hinge domain; that stretch reads DVFGYVAHLI…DSLDVAREIA (129 aa). Coiled-coil stretches lie at residues 701–946 and 975–1037; these read PQIE…RKEA and YTVS…IATL. The segment covering 919 to 932 has biased composition (basic and acidic residues); sequence AKTKSKREEKEKEL. The segment at 919–943 is disordered; the sequence is AKTKSKREEKEKELTSLQQSEASNR. Over residues 1216-1232 the composition is skewed to basic and acidic residues; that stretch reads DAAAKKGAQKNDKEPPK. Residues 1216–1244 form a disordered region; that stretch reads DAAAKKGAQKNDKEPPKKKPIVVDDDDFE.

Belongs to the SMC family. SMC2 subfamily. In terms of assembly, component of the condensin I complex, which contains the mix-1/SMC2 and smc-4/SMC4 heterodimer, and three non SMC subunits that probably regulate the complex: dpy-26, capg-1 and dpy-28. Within the complex, interacts with smc-4, dpy-26, dpy-28 and capg-1. Interaction with smc-4 is required for mitotic chromosome localization. Component of the condensin II complex, which contains the mix-1/SMC2 and smc-4/SMC4 heterodimer, and three non SMC subunits, capg-2, kle-2 and hcp-6 that probably regulate the complex. Within the complex, interacts with smc-4, capg-2, kle-2 and hcp-6. Also a component of the condensin-like dosage compensation complex, which contains the mix-1/SMC2 and dpy-27/SMC4 heterodimer, and three non SMC subunits that probably regulate the complex: dpy-26, capg-1 and dpy-28. Within the complex, interacts with dpy-27, dpy-26, capg-1 and dpy-28. Requires capg-1 for hermaphrodite X chromosome localization. Interacts with smcl-1. As to expression, expressed in embryos and in adult somatic and germline tissues (at protein level).

The protein localises to the nucleus. The protein resides in the chromosome. In terms of biological role, essential protein required for both chromosome condensation and segregation and X-chromosome dosage compensation depending on its binding partners. Central component of the condensin I complex, a complex required for conversion of interphase chromatin into mitotic-like condense chromosomes. The condensin complex introduces positive supercoils into relaxed DNA in the presence of type I topoisomerases. Converts nicked DNA into positive knotted forms in the presence of type II topoisomerases. Central component of the condensin II complex, a complex that seems to play a role in prophase chromosome condensation and organization. Both the condensin complex I and II play a role in meiotic and mitotic chromosome segregation. Plays a role in robust cytokinesis upon the presence of chromatin obstructions. Also a member of the condensin I-like dosage compensation complex that associates specifically with hermaphrodite X chromosomes to reduce their gene transcription during interphase. This is Mitotic chromosome and X-chromosome-associated protein mix-1 (mix-1) from Caenorhabditis elegans.